Here is a 345-residue protein sequence, read N- to C-terminus: Phosphoribosylformylglycinamidine cyclo-ligase (345 aa).

The protein belongs to the AIR synthase family.

Its subcellular location is the cytoplasm. The enzyme catalyses 2-formamido-N(1)-(5-O-phospho-beta-D-ribosyl)acetamidine + ATP = 5-amino-1-(5-phospho-beta-D-ribosyl)imidazole + ADP + phosphate + H(+). It functions in the pathway purine metabolism; IMP biosynthesis via de novo pathway; 5-amino-1-(5-phospho-D-ribosyl)imidazole from N(2)-formyl-N(1)-(5-phospho-D-ribosyl)glycinamide: step 2/2. This Methylococcus capsulatus (strain ATCC 33009 / NCIMB 11132 / Bath) protein is Phosphoribosylformylglycinamidine cyclo-ligase.